We begin with the raw amino-acid sequence, 436 residues long: Type II methyltransferase M.BsuRI (436 aa).

Residues 59–409 (INVLSLFSGC…SPIANWAINY (351 aa)) enclose the SAM-dependent MTase C5-type domain. C157 is an active-site residue.

This sequence belongs to the class I-like SAM-binding methyltransferase superfamily. C5-methyltransferase family. As to quaternary structure, monomer.

The enzyme catalyses a 2'-deoxycytidine in DNA + S-adenosyl-L-methionine = a 5-methyl-2'-deoxycytidine in DNA + S-adenosyl-L-homocysteine + H(+). A methylase, recognizes the double-stranded sequence 5'-GGCC-3', methylates C-3 on both strands, and protects the DNA from cleavage by the BsuRI endonuclease. The sequence is that of Type II methyltransferase M.BsuRI (hsdRM) from Bacillus subtilis.